The chain runs to 171 residues: Small ribosomal subunit protein uS5 (171 aa).

In terms of domain architecture, S5 DRBM spans 16-79 (LIEKIVFINR…ERARKDMALV (64 aa)).

This sequence belongs to the universal ribosomal protein uS5 family. Part of the 30S ribosomal subunit. Contacts proteins S4 and S8.

In terms of biological role, with S4 and S12 plays an important role in translational accuracy. Functionally, located at the back of the 30S subunit body where it stabilizes the conformation of the head with respect to the body. The chain is Small ribosomal subunit protein uS5 from Desulfotalea psychrophila (strain LSv54 / DSM 12343).